A 160-amino-acid chain; its full sequence is Anaerobic nitrite reductase Glb1-1 (160 aa).

The Globin domain occupies 8–157 (GFTEEQEALV…LVNAIKSEMK (150 aa)). The short motif at 41 to 45 (EIAPS) is the Homodimerization element. 5 residues coordinate heme b: S51, K65, H69, K99, and H104. The Homodimerization motif lies at 111 to 123 (DEHFEVTKFALLE).

The protein belongs to the plant globin family. In terms of assembly, homodimer. The cofactor is heme b.

It catalyses the reaction Fe(III)-heme b-[protein] + nitric oxide + H2O = Fe(II)-heme b-[protein] + nitrite + 2 H(+). Its function is as follows. Phytoglobin that reduces nitrite to nitric oxide (NO) under anoxic conditions (e.g. during flooding or in waterlogged soil) and upon root nodulation. Required for general plant development and during nodulation, especially for the onset of symbiosis. Monitors nitric oxide (NO) levels during early phase of the nitrogen-fixing symbiosis and buffers oxygen in functioning nodules. May not function as an oxygen storage or transport protein. Has an unusually high affinity for O(2) through a hexacoordinate heme iron because of a very low dissociation constant. This is Anaerobic nitrite reductase Glb1-1 from Medicago truncatula (Barrel medic).